We begin with the raw amino-acid sequence, 414 residues long: Mu-like prophage FluMu F protein (414 aa).

The protein to phage Mu protein F.

Functionally, involved in virion morphogenesis. The sequence is that of Mu-like prophage FluMu F protein from Haemophilus influenzae (strain ATCC 51907 / DSM 11121 / KW20 / Rd).